Here is a 139-residue protein sequence, read N- to C-terminus: Large ribosomal subunit protein uL16 (139 aa).

Over residues 1–13 the composition is skewed to basic residues; sequence MLQPARRKYRKEQ. Residues 1–23 are disordered; that stretch reads MLQPARRKYRKEQKGRNTGISHS.

The protein belongs to the universal ribosomal protein uL16 family. In terms of assembly, part of the 50S ribosomal subunit.

Functionally, binds 23S rRNA and is also seen to make contacts with the A and possibly P site tRNAs. This is Large ribosomal subunit protein uL16 from Herminiimonas arsenicoxydans.